The primary structure comprises 570 residues: MAKYVVGSAWPYVQTVPHLGNMIGSVLSADVYARYLRLRGHEVVFVSGSDMHGTPIEVEAIQLGVDPADYALKMHQIVAELFRRWDISFDLYTHTHSETHIKFVQEFFARVYENGFIFTRDDEVPYCPRDKIYLPDRFVIGKCPYCGYERARGDQCENCGRLLDPKQLIEPRCAVCGSKPEWRVTRHWYLDLRRLEDRIRKYVEGNPHLPLNAKEMSLAMLKEGMRPRAITRDNKWGIPAPFPGAEGKTIYVWFEAVLGYISAVVEYFKKLGREEEWKRFWLDQETKVVFFVGKDNVPFHVIILPALLMASGENYVMPTTTASTEYLLYEGDKFSKSRRWGIWIDEALHLLPTDYWRFVLVYIRPENRDTSFTWQTALEVINKVLNDDVGNYANRVLSFIKSRMGGAVPPPGKPSPEDEEFISKVAQLFQKAEAHYDAIELKEAVHTVVEIAREGNKYLNARAPWELAKKDAEAANAVLYRAFWSLKYLAAGLAPVVPRSAETLWAMMGISTPLTWEEAKKPPTPGAQLGEVKPLFRKITEQDVKVLLAKLEELRAQKYSRKYPWEQVLL.

Residues 11-21 carry the 'HIGH' region motif; sequence PYVQTVPHLGN. Zn(2+) is bound by residues Cys-143, Cys-146, Cys-156, and Cys-159. The 'KMSKS' region signature appears at 333-337; it reads KFSKS. Lys-336 is a binding site for ATP.

This sequence belongs to the class-I aminoacyl-tRNA synthetase family. MetG type 1 subfamily. The cofactor is Zn(2+).

It is found in the cytoplasm. It carries out the reaction tRNA(Met) + L-methionine + ATP = L-methionyl-tRNA(Met) + AMP + diphosphate. Functionally, is required not only for elongation of protein synthesis but also for the initiation of all mRNA translation through initiator tRNA(fMet) aminoacylation. The polypeptide is Methionine--tRNA ligase (Pyrobaculum arsenaticum (strain DSM 13514 / JCM 11321 / PZ6)).